Consider the following 349-residue polypeptide: Holliday junction branch migration complex subunit RuvB (349 aa).

The tract at residues 1 to 183 (MTDPSRLVTP…FGIPIRLNFY (183 aa)) is large ATPase domain (RuvB-L). ATP contacts are provided by residues leucine 22, arginine 23, glycine 64, lysine 67, threonine 68, threonine 69, 130–132 (EDF), arginine 173, tyrosine 183, and arginine 220. Threonine 68 serves as a coordination point for Mg(2+). Residues 184–254 (TIEELESIVT…IADHALGALE (71 aa)) are small ATPAse domain (RuvB-S). Residues 257–349 (SAGLDAMDRR…GLFGDTGDQE (93 aa)) are head domain (RuvB-H). The DNA site is built by arginine 293, arginine 312, and arginine 317.

Belongs to the RuvB family. As to quaternary structure, homohexamer. Forms an RuvA(8)-RuvB(12)-Holliday junction (HJ) complex. HJ DNA is sandwiched between 2 RuvA tetramers; dsDNA enters through RuvA and exits via RuvB. An RuvB hexamer assembles on each DNA strand where it exits the tetramer. Each RuvB hexamer is contacted by two RuvA subunits (via domain III) on 2 adjacent RuvB subunits; this complex drives branch migration. In the full resolvosome a probable DNA-RuvA(4)-RuvB(12)-RuvC(2) complex forms which resolves the HJ.

The protein localises to the cytoplasm. It carries out the reaction ATP + H2O = ADP + phosphate + H(+). In terms of biological role, the RuvA-RuvB-RuvC complex processes Holliday junction (HJ) DNA during genetic recombination and DNA repair, while the RuvA-RuvB complex plays an important role in the rescue of blocked DNA replication forks via replication fork reversal (RFR). RuvA specifically binds to HJ cruciform DNA, conferring on it an open structure. The RuvB hexamer acts as an ATP-dependent pump, pulling dsDNA into and through the RuvAB complex. RuvB forms 2 homohexamers on either side of HJ DNA bound by 1 or 2 RuvA tetramers; 4 subunits per hexamer contact DNA at a time. Coordinated motions by a converter formed by DNA-disengaged RuvB subunits stimulates ATP hydrolysis and nucleotide exchange. Immobilization of the converter enables RuvB to convert the ATP-contained energy into a lever motion, pulling 2 nucleotides of DNA out of the RuvA tetramer per ATP hydrolyzed, thus driving DNA branch migration. The RuvB motors rotate together with the DNA substrate, which together with the progressing nucleotide cycle form the mechanistic basis for DNA recombination by continuous HJ branch migration. Branch migration allows RuvC to scan DNA until it finds its consensus sequence, where it cleaves and resolves cruciform DNA. This Rhodopseudomonas palustris (strain TIE-1) protein is Holliday junction branch migration complex subunit RuvB.